A 413-amino-acid polypeptide reads, in one-letter code: 4-hydroxy-3-methylbut-2-en-1-yl diphosphate synthase (flavodoxin) (413 aa).

4 residues coordinate [4Fe-4S] cluster: cysteine 305, cysteine 308, cysteine 351, and glutamate 358.

This sequence belongs to the IspG family. The cofactor is [4Fe-4S] cluster.

It carries out the reaction (2E)-4-hydroxy-3-methylbut-2-enyl diphosphate + oxidized [flavodoxin] + H2O + 2 H(+) = 2-C-methyl-D-erythritol 2,4-cyclic diphosphate + reduced [flavodoxin]. It participates in isoprenoid biosynthesis; isopentenyl diphosphate biosynthesis via DXP pathway; isopentenyl diphosphate from 1-deoxy-D-xylulose 5-phosphate: step 5/6. Functionally, converts 2C-methyl-D-erythritol 2,4-cyclodiphosphate (ME-2,4cPP) into 1-hydroxy-2-methyl-2-(E)-butenyl 4-diphosphate. The sequence is that of 4-hydroxy-3-methylbut-2-en-1-yl diphosphate synthase (flavodoxin) from Bartonella tribocorum (strain CIP 105476 / IBS 506).